Reading from the N-terminus, the 33-residue chain is Photosystem II reaction center protein T (33 aa).

A helical transmembrane segment spans residues 3–23 (ALVYTFLLVSTLGIIFFAIFF).

This sequence belongs to the PsbT family. As to quaternary structure, PSII is composed of 1 copy each of membrane proteins PsbA, PsbB, PsbC, PsbD, PsbE, PsbF, PsbH, PsbI, PsbJ, PsbK, PsbL, PsbM, PsbT, PsbY, PsbZ, Psb30/Ycf12, at least 3 peripheral proteins of the oxygen-evolving complex and a large number of cofactors. It forms dimeric complexes.

The protein resides in the plastid. It localises to the chloroplast thylakoid membrane. Found at the monomer-monomer interface of the photosystem II (PS II) dimer, plays a role in assembly and dimerization of PSII. PSII is a light-driven water plastoquinone oxidoreductase, using light energy to abstract electrons from H(2)O, generating a proton gradient subsequently used for ATP formation. The polypeptide is Photosystem II reaction center protein T (Asparagus officinalis (Garden asparagus)).